The chain runs to 259 residues: Indole-3-glycerol phosphate synthase (259 aa).

It belongs to the TrpC family.

It catalyses the reaction 1-(2-carboxyphenylamino)-1-deoxy-D-ribulose 5-phosphate + H(+) = (1S,2R)-1-C-(indol-3-yl)glycerol 3-phosphate + CO2 + H2O. Its pathway is amino-acid biosynthesis; L-tryptophan biosynthesis; L-tryptophan from chorismate: step 4/5. The polypeptide is Indole-3-glycerol phosphate synthase (Dehalococcoides mccartyi (strain CBDB1)).